The sequence spans 443 residues: Minovincinine 19-hydroxy-O-acetyltransferase (443 aa).

The active-site Proton acceptor is His-157. The Nuclear localization signal signature appears at 215-222 (RKRFLFSP). Positions 316 to 343 (TKLVIGELRKAKDKLKNLSQEKLNYVAR) form a coiled coil. The active-site Proton acceptor is Asp-384.

Belongs to the plant acyltransferase family. As to quaternary structure, monomer. Expressed in cortical cells of the root tip, especially in hairy roots, as well as in etiolated seedlings. Mostly expressed in roots, and, at lower levels, in leaves.

It is found in the cytoplasm. Its subcellular location is the nucleus. The catalysed reaction is (+)-minovincinine + acetyl-CoA = (+)-echitovenine + CoA. Its pathway is alkaloid biosynthesis. Component of the monoterpenoid indole alkaloids (MIAs, e.g. echitovenine, tabersonine, lochnericine, 19-hydroxytabersonine and horhammericine) biosynthetic pathway; MIAs are used in cancer treatment and other medical applications. Acyltransferase catalyzing the conversion of (+)-minovincinine to (+)-echitovenine. This is Minovincinine 19-hydroxy-O-acetyltransferase from Catharanthus roseus (Madagascar periwinkle).